A 264-amino-acid polypeptide reads, in one-letter code: RNA-binding protein pos-1 (264 aa).

Positions 56 to 82 (QDKETQNSASQPTSEQSLANRDPCTVP) are disordered. Polar residues predominate over residues 61–74 (QNSASQPTSEQSLA). 2 C3H1-type zinc fingers span residues 98 to 126 (AFKT…HGVH) and 141 to 169 (KYKT…HKIV). C104, C113, C119, H123, C147, C156, C162, and H166 together coordinate Zn(2+).

As to quaternary structure, monomer.

Its subcellular location is the cytoplasm. In terms of biological role, RNA-binding protein that coordinates cell fate specification and differentiation during early embryogenesis. Binds to a consensus pos-1 recognition element (PRE) consisting of the sequence 5'-UA(U 2-3)RGD(N 1-3)G-3', where R is any purine, D is A, G, or U, and N is any base. The PRE motif is found within the 3' untranslated region of many maternal transcripts required for early development. Binds to the 3' untranslated region (UTR) of Notch receptor homolog glp-1, thereby repressing glp-1 translation in the posterior blastomeres in the embryo. Binding to glp-1 3' UTR excludes cell fate regulator gld-1 binding to an overlapping binding site in the glp-1 3' UTR. Binds to the neg-1 3'UTR thereby opposing neg-1 expression and cytoplasmic polyadenylation of the neg-1 mRNA poly(A) tail promoted by gld-2 and gld-3. By inhibiting the cytoplasmic lengthening of neg-1 mRNA, restricts the accumulation of neg-1 protein and promotes endo-mesoderm development in anterior blastomeres. Essential for germline specification. The chain is RNA-binding protein pos-1 from Caenorhabditis elegans.